We begin with the raw amino-acid sequence, 222 residues long: Phosphoribosylformylglycinamidine synthase subunit PurQ (222 aa).

Residues 3–222 (AAVVVFPGSN…RALTGALAAV (220 aa)) enclose the Glutamine amidotransferase type-1 domain. The active-site Nucleophile is Cys86. Active-site residues include His194 and Glu196.

Part of the FGAM synthase complex composed of 1 PurL, 1 PurQ and 2 PurS subunits.

The protein localises to the cytoplasm. The enzyme catalyses N(2)-formyl-N(1)-(5-phospho-beta-D-ribosyl)glycinamide + L-glutamine + ATP + H2O = 2-formamido-N(1)-(5-O-phospho-beta-D-ribosyl)acetamidine + L-glutamate + ADP + phosphate + H(+). It carries out the reaction L-glutamine + H2O = L-glutamate + NH4(+). It participates in purine metabolism; IMP biosynthesis via de novo pathway; 5-amino-1-(5-phospho-D-ribosyl)imidazole from N(2)-formyl-N(1)-(5-phospho-D-ribosyl)glycinamide: step 1/2. Its function is as follows. Part of the phosphoribosylformylglycinamidine synthase complex involved in the purines biosynthetic pathway. Catalyzes the ATP-dependent conversion of formylglycinamide ribonucleotide (FGAR) and glutamine to yield formylglycinamidine ribonucleotide (FGAM) and glutamate. The FGAM synthase complex is composed of three subunits. PurQ produces an ammonia molecule by converting glutamine to glutamate. PurL transfers the ammonia molecule to FGAR to form FGAM in an ATP-dependent manner. PurS interacts with PurQ and PurL and is thought to assist in the transfer of the ammonia molecule from PurQ to PurL. This Roseobacter denitrificans (strain ATCC 33942 / OCh 114) (Erythrobacter sp. (strain OCh 114)) protein is Phosphoribosylformylglycinamidine synthase subunit PurQ.